We begin with the raw amino-acid sequence, 542 residues long: MESQKQEDNEYIFRSLYPSVPIPDKLTLPEFVLQGVEEYTENVAFVEAVTGKAVTYGDVVRDTKRLAKALTSLGLRKGQVMVVVLPNVAEYGIIALGIMSAGGVFSGANPTALVSEIKKQVEASGARGIITDATNYEKVKSLGLPVIVLGEEKIEGAVNWKDLLEAGDKCGDTDNEEILQTDLCALPFSSGTTGLQKGVMLTHRNLIANLCSTLFGVRSEMIGQIVTLGLIPFFHIYGIVGICCATMKNKGKVVAMSRYDLRIFLNALIAHEVSFAPIVPPIILNLVKNPIVDEFDLSKLKLQSVMTAAAPLAPELLTAFEAKFPNVQVQEAYGLTEHSCITLTHGDPEKGQGIAKRNSVGFILPNLEVKFIDPDTGRSLPKNTSGELCVRSQCVMQGYFMNKEETDKTIDEQGWLHTGDIGYIDDDGDIFIVDRIKELIKYKGFQVAPAELEAILLTHPSVEDVAVVPLPDEEAGEIPAACVVINPKATEKEEDILNFVAANVAHYKKVRAVHFVDSIPKSLSGKIMRRLLRDKILSINKK.

ATP contacts are provided by Ser189, Ser190, Gly191, Thr192, Thr193, and Lys197. A (E)-4-coumaroyl-AMP-binding site is contributed by Tyr237. Residue Arg258 participates in CoA binding. An SBD1 region spans residues 260–331 (DLRIFLNALI…AKFPNVQVQE (72 aa)). 4 residues coordinate (E)-4-coumaroyl-AMP: Ala309, Glu331, Ala332, and Thr336. ATP-binding residues include Glu331, Ala332, Thr336, Asp420, and Arg435. Residues 332 to 399 (AYGLTEHSCI…VRSQCVMQGY (68 aa)) form an SBD2 region. (E)-4-coumaroyl-AMP contacts are provided by Lys437 and Lys441. Residues Lys443 and Gly444 each contribute to the CoA site. ATP is bound at residue Lys526.

Belongs to the ATP-dependent AMP-binding enzyme family. As to quaternary structure, interacts with TKPR1, PKSA and PKSB. Mg(2+) serves as cofactor. Mostly confined to anther tapetal cells.

The protein localises to the endoplasmic reticulum. It catalyses the reaction (E)-4-coumarate + ATP + CoA = (E)-4-coumaroyl-CoA + AMP + diphosphate. The enzyme catalyses (E)-4-coumarate + ATP + H(+) = (E)-4-coumaroyl-AMP + diphosphate. It carries out the reaction (E)-4-coumaroyl-AMP + CoA = (E)-4-coumaroyl-CoA + AMP + H(+). Functionally, carboxylate--CoA ligase that may use 4-coumarate as substrate. Follows a two-step reaction mechanism, wherein the carboxylate substrate first undergoes adenylation by ATP, followed by a thioesterification in the presence of CoA to yield the final CoA thioester. In Arabidopsis thaliana (Mouse-ear cress), this protein is 4-coumarate--CoA ligase-like 1.